Here is a 448-residue protein sequence, read N- to C-terminus: Phosphoglucosamine mutase (448 aa).

Catalysis depends on Ser101, which acts as the Phosphoserine intermediate. Residues Ser101, Asp241, Asp243, and Asp245 each coordinate Mg(2+). Phosphoserine is present on Ser101.

The protein belongs to the phosphohexose mutase family. Requires Mg(2+) as cofactor. In terms of processing, activated by phosphorylation.

It catalyses the reaction alpha-D-glucosamine 1-phosphate = D-glucosamine 6-phosphate. In terms of biological role, catalyzes the conversion of glucosamine-6-phosphate to glucosamine-1-phosphate. The protein is Phosphoglucosamine mutase of Macrococcus caseolyticus (strain JCSC5402) (Macrococcoides caseolyticum).